Here is a 303-residue protein sequence, read N- to C-terminus: MQRPGPFSTLYGRVLAPLPGRAGGAASGGGGNNWGLSGSHVQLPGRAHSETRGDKGGSSAGGPAPSTMSKAEEAKKLASHTAVENHVKNNQVLGIGSGSTIVHAVQRIAERVKQENLDLICIPTSFQARQLILQYGLTLSDLDQHPEIDLAIDGADEVDAELNLIKGGGGCLTQEKIVAGYASRFIVIADFRKDSKNLGDRWHKGIPIEVIPMAYVPVSRAVAQKFGGEVELRMAVNKAGPVVTDNGNFILDWKFDRVHKWSEVNTAIKMTPGVVDTGLFINMAERVYFGMQDGSVNVREKPF.

The segment covering 22–33 (AGGAASGGGGNN) has biased composition (gly residues). Residues 22–75 (AGGAASGGGGNNWGLSGSHVQLPGRAHSETRGDKGGSSAGGPAPSTMSKAEEAK) are disordered. R52 carries the post-translational modification Omega-N-methylarginine. At S99 the chain carries Phosphoserine.

The protein belongs to the ribose 5-phosphate isomerase family. In terms of tissue distribution, widely expressed, with highest levels in testis.

The enzyme catalyses aldehydo-D-ribose 5-phosphate = D-ribulose 5-phosphate. The protein operates within carbohydrate degradation; pentose phosphate pathway; D-ribose 5-phosphate from D-ribulose 5-phosphate (non-oxidative stage): step 1/1. This Mus musculus (Mouse) protein is Ribose-5-phosphate isomerase (Rpia).